A 159-amino-acid chain; its full sequence is Glutamate-rich protein GrpA (159 aa).

The sequence is that of Glutamate-rich protein GrpA (grpA) from Alkalihalophilus pseudofirmus (strain ATCC BAA-2126 / JCM 17055 / OF4) (Bacillus pseudofirmus).